The sequence spans 476 residues: UDP-N-acetylmuramate--L-alanine ligase (476 aa).

Position 121–127 (121–127) interacts with ATP; the sequence is GAHGKTT.

It belongs to the MurCDEF family.

It localises to the cytoplasm. The catalysed reaction is UDP-N-acetyl-alpha-D-muramate + L-alanine + ATP = UDP-N-acetyl-alpha-D-muramoyl-L-alanine + ADP + phosphate + H(+). It participates in cell wall biogenesis; peptidoglycan biosynthesis. Functionally, cell wall formation. The protein is UDP-N-acetylmuramate--L-alanine ligase of Clavibacter michiganensis subsp. michiganensis (strain NCPPB 382).